We begin with the raw amino-acid sequence, 368 residues long: FAD-dependent monooxygenase phomE (368 aa).

Residue Ala-11 coordinates FAD. Catalysis depends on residues Arg-140 and Tyr-178. FAD is bound by residues Asp-249 and Gly-262.

This sequence belongs to the paxM FAD-dependent monooxygenase family. In terms of assembly, monomer. FAD is required as a cofactor.

In terms of biological role, FAD-dependent monooxygenase; part of the gene cluster that mediates the biosynthesis of the phomopsins, a group of hexapeptide mycotoxins which infects lupins and causes lupinosis disease in livestock. The role of phomE within the phomopsins biosynthesis pathway has still to be determined. The pathway starts with the processing of the precursor phomA by several endopeptidases including kexin proteases as well as the cluster-specific S41 family peptidase phomP1 and the oligopeptidase phomG to produce 10 identical copies of the hexapeptide Tyr-Val-Ile-Pro-Ile-Asp. After being excised from the precursor peptide, the core peptides are cyclized and modified post-translationally by enzymes encoded within the gene cluster. The timing and order of proteolysis of the phomA precursor and PTMs are still unknown. Two tyrosinase-like enzymes, phomQ1 and phomQ2, catalyze the chlorination and hydroxylation of Tyr, respectively. PhomYb, is proposed to be involved in the construction of the macrocyclic structure. The other 4 ustYa family proteins may be involved in PTMs that generate the unique structure of phomopsin A. PhomYa is required for the hydroxylation of C-beta of Tyr. PhomYc, phomYd, and phomYe are responsible for the biosynthesis of 2,3-dehydroisoleucine (dIle), 2,3-dehydroaspartic acid (dAsp), and 3,4-dehydroproline (dPro), respectively. While dIle formation by phomYc is indispensable for the installation of dAsp by phomYd, the order of the other PTMs have not been elucidated yet. Most of the biosynthetic enzymes likely have broad substrate specificity, and thus, there might be a metabolic grid from a precursor to phomopsin A. The enzyme(s) responsible for the biosynthesis of 3,4-dehydrovaline (dVal) have also not been identified yet. Finally, phomM acts as an S-adenosylmethionine-dependent alpha-N-methyltransferase that catalyzes two successive N-methylation reactions, converting N-desmethyl-phomopsin A to phomopsin A and phomopsin A further to an N,N-dimethylated congener called phomopsin E. This Diaporthe leptostromiformis (Lupinosis disease fungus) protein is FAD-dependent monooxygenase phomE.